Here is a 619-residue protein sequence, read N- to C-terminus: ATP-dependent DNA helicase RecQ (619 aa).

The Helicase ATP-binding domain occupies 37–205; sequence INAALNGQDA…LRHLNLKNLH (169 aa). Residue 50 to 57 coordinates ATP; it reads MATGNGKS. Positions 149–152 match the DEAH box motif; sequence DEAH. Positions 229–374 constitute a Helicase C-terminal domain; it reads QLTRFVLAQK…QIEQHKLEAI (146 aa). The Zn(2+) site is built by Cys383, Cys400, Cys403, and Cys406. Residues 535-615 enclose the HRDC domain; sequence ANYDKDLFAR…QEHKAILANA (81 aa).

It belongs to the helicase family. RecQ subfamily. Mg(2+) is required as a cofactor. It depends on Zn(2+) as a cofactor.

It catalyses the reaction Couples ATP hydrolysis with the unwinding of duplex DNA by translocating in the 3'-5' direction.. The catalysed reaction is ATP + H2O = ADP + phosphate + H(+). Functionally, an ATP-dependent DNA helicase which unwinds DNA in a 3'-5' direction. Plays a role in recombination. This chain is ATP-dependent DNA helicase RecQ, found in Haemophilus influenzae (strain ATCC 51907 / DSM 11121 / KW20 / Rd).